The primary structure comprises 82 residues: Cortexin-1 (82 aa).

The segment at 1-20 (MSSAWTLSPEPLPPSTGPPV) is disordered. Residues 30 to 50 (TVFAFVLCLLVVLVLLMVRCV) form a helical membrane-spanning segment.

It belongs to the cortexin family.

The protein resides in the membrane. Its function is as follows. May mediate extracellular or intracellular signaling of cortical neurons during forebrain development. The protein is Cortexin-1 (Ctxn1) of Mus musculus (Mouse).